We begin with the raw amino-acid sequence, 434 residues long: ATP-dependent RNA helicase RhlB (434 aa).

Residues 9 to 37 carry the Q motif motif; it reads QKFADLGLEPQVLDGLNAKGFINCTPIQA. The Helicase ATP-binding domain occupies 40-219; the sequence is LPVLLAGQDI…FEHMQEPEHV (180 aa). 53 to 60 contacts ATP; that stretch reads AQTGTGKT. Positions 165–168 match the DEAD box motif; it reads DEAD. Positions 245–390 constitute a Helicase C-terminal domain; that stretch reads ALLQTLIEEE…QSDYDTSALL (146 aa). The disordered stretch occupies residues 394–434; sequence PAPIRLQRRPPQNRRNGSNNGQRQSGNRKHSRPRPPRSPQA. Over residues 406-418 the composition is skewed to low complexity; that stretch reads NRRNGSNNGQRQS. The span at 419-428 shows a compositional bias: basic residues; it reads GNRKHSRPRP.

The protein belongs to the DEAD box helicase family. RhlB subfamily. As to quaternary structure, component of the RNA degradosome, which is a multiprotein complex involved in RNA processing and mRNA degradation.

The protein localises to the cytoplasm. It catalyses the reaction ATP + H2O = ADP + phosphate + H(+). Its function is as follows. DEAD-box RNA helicase involved in RNA degradation. Has RNA-dependent ATPase activity and unwinds double-stranded RNA. In Aliivibrio salmonicida (strain LFI1238) (Vibrio salmonicida (strain LFI1238)), this protein is ATP-dependent RNA helicase RhlB.